Here is a 240-residue protein sequence, read N- to C-terminus: tRNA (guanine-N(7)-)-methyltransferase (240 aa).

The disordered stretch occupies residues 1–20; it reads MTESHDTPITPDGEARPHRR. 4 residues coordinate S-adenosyl-L-methionine: glutamate 70, glutamate 95, aspartate 122, and aspartate 145. Aspartate 145 is a catalytic residue. Residues lysine 149, aspartate 181, and 218–221 each bind substrate; that span reads TKFE.

It belongs to the class I-like SAM-binding methyltransferase superfamily. TrmB family.

It catalyses the reaction guanosine(46) in tRNA + S-adenosyl-L-methionine = N(7)-methylguanosine(46) in tRNA + S-adenosyl-L-homocysteine. Its pathway is tRNA modification; N(7)-methylguanine-tRNA biosynthesis. Functionally, catalyzes the formation of N(7)-methylguanine at position 46 (m7G46) in tRNA. The protein is tRNA (guanine-N(7)-)-methyltransferase of Pseudomonas putida (strain ATCC 47054 / DSM 6125 / CFBP 8728 / NCIMB 11950 / KT2440).